Reading from the N-terminus, the 251-residue chain is Zinc import ATP-binding protein ZnuC (251 aa).

Residues 5-220 (VSLENVSVSF…PEFISMFGPR (216 aa)) form the ABC transporter domain. 37 to 44 (GPNGAGKS) contributes to the ATP binding site.

The protein belongs to the ABC transporter superfamily. Zinc importer (TC 3.A.1.15.5) family. In terms of assembly, the complex is composed of two ATP-binding proteins (ZnuC), two transmembrane proteins (ZnuB) and a solute-binding protein (ZnuA).

The protein resides in the cell inner membrane. It carries out the reaction Zn(2+)(out) + ATP(in) + H2O(in) = Zn(2+)(in) + ADP(in) + phosphate(in) + H(+)(in). Part of the ABC transporter complex ZnuABC involved in zinc import. Responsible for energy coupling to the transport system. The polypeptide is Zinc import ATP-binding protein ZnuC (Escherichia coli O157:H7).